The following is a 196-amino-acid chain: Lipoprotein signal peptidase (196 aa).

2 consecutive transmembrane segments (helical) span residues Ile-75–Ser-95 and Thr-97–Asp-117. Active-site residues include Asp-126 and Asp-144. Residues Tyr-135–Val-155 form a helical membrane-spanning segment.

The protein belongs to the peptidase A8 family.

Its subcellular location is the cell inner membrane. The catalysed reaction is Release of signal peptides from bacterial membrane prolipoproteins. Hydrolyzes -Xaa-Yaa-Zaa-|-(S,diacylglyceryl)Cys-, in which Xaa is hydrophobic (preferably Leu), and Yaa (Ala or Ser) and Zaa (Gly or Ala) have small, neutral side chains.. It participates in protein modification; lipoprotein biosynthesis (signal peptide cleavage). This protein specifically catalyzes the removal of signal peptides from prolipoproteins. The protein is Lipoprotein signal peptidase of Rickettsia bellii (strain OSU 85-389).